A 104-amino-acid chain; its full sequence is Large ribosomal subunit protein uL24 (104 aa).

Belongs to the universal ribosomal protein uL24 family. Part of the 50S ribosomal subunit.

Its function is as follows. One of two assembly initiator proteins, it binds directly to the 5'-end of the 23S rRNA, where it nucleates assembly of the 50S subunit. One of the proteins that surrounds the polypeptide exit tunnel on the outside of the subunit. The polypeptide is Large ribosomal subunit protein uL24 (Chelativorans sp. (strain BNC1)).